Reading from the N-terminus, the 375-residue chain is Alcohol dehydrogenase 4, mitochondrial (375 aa).

The N-terminal 27 residues, 1 to 27 (MFRLARAQTALANKASVSRSFLRLNSS), are a transit peptide targeting the mitochondrion. 7 residues coordinate Zn(2+): cysteine 71, histidine 94, cysteine 125, cysteine 128, cysteine 131, cysteine 139, and cysteine 181. NAD(+) contacts are provided by residues 205–211 (GAAGGLG), aspartate 229, lysine 234, 296–298 (VGL), and arginine 368.

It belongs to the zinc-containing alcohol dehydrogenase family. Homotetramer. The cofactor is Zn(2+).

The protein localises to the mitochondrion matrix. The enzyme catalyses a primary alcohol + NAD(+) = an aldehyde + NADH + H(+). It carries out the reaction a secondary alcohol + NAD(+) = a ketone + NADH + H(+). This Kluyveromyces lactis (strain ATCC 8585 / CBS 2359 / DSM 70799 / NBRC 1267 / NRRL Y-1140 / WM37) (Yeast) protein is Alcohol dehydrogenase 4, mitochondrial (ADH4).